The following is a 60-amino-acid chain: MAKKLEITLTRSVIGRPQDQRATVEALGLKKLNSTVVKEETPAILGMINKVSHLITVKEA.

This sequence belongs to the universal ribosomal protein uL30 family. In terms of assembly, part of the 50S ribosomal subunit.

The protein is Large ribosomal subunit protein uL30 of Bacillus mycoides (strain KBAB4) (Bacillus weihenstephanensis).